The following is a 466-amino-acid chain: Ribulose bisphosphate carboxylase large chain (466 aa).

Lys4 is subject to N6,N6,N6-trimethyllysine. Substrate-binding residues include Asn113 and Thr163. Catalysis depends on Lys165, which acts as the Proton acceptor. Lys167 is a binding site for substrate. Mg(2+)-binding residues include Lys191, Asp193, and Glu194. At Lys191 the chain carries N6-carboxylysine. The active-site Proton acceptor is the His284. Substrate contacts are provided by Arg285, His317, and Ser369.

The protein belongs to the RuBisCO large chain family. Type I subfamily. As to quaternary structure, heterohexadecamer of 8 large chains and 8 small chains; disulfide-linked. The disulfide link is formed within the large subunit homodimers. The cofactor is Mg(2+). The disulfide bond which can form in the large chain dimeric partners within the hexadecamer appears to be associated with oxidative stress and protein turnover.

The protein localises to the plastid. It is found in the chloroplast. It carries out the reaction 2 (2R)-3-phosphoglycerate + 2 H(+) = D-ribulose 1,5-bisphosphate + CO2 + H2O. The enzyme catalyses D-ribulose 1,5-bisphosphate + O2 = 2-phosphoglycolate + (2R)-3-phosphoglycerate + 2 H(+). Its function is as follows. RuBisCO catalyzes two reactions: the carboxylation of D-ribulose 1,5-bisphosphate, the primary event in carbon dioxide fixation, as well as the oxidative fragmentation of the pentose substrate in the photorespiration process. Both reactions occur simultaneously and in competition at the same active site. This chain is Ribulose bisphosphate carboxylase large chain, found in Drimys winteri (Winter's bark).